Reading from the N-terminus, the 295-residue chain is GTPase Era (295 aa).

An Era-type G domain is found at 7 to 176; sequence KTVSVCIIGR…ITSKAKIAPW (170 aa). Residues 15-22 form a G1 region; that stretch reads GRPNSGKS. 15–22 lines the GTP pocket; sequence GRPNSGKS. The segment at 41–45 is G2; it reads QTTRS. Residues 62–65 are G3; it reads DTPG. Residues 62–66 and 124–127 each bind GTP; these read DTPGI and NKIE. The tract at residues 124–127 is G4; sequence NKIE. Residues 152–154 are G5; it reads ISA. A KH type-2 domain is found at 204–281; it reads LQQELPYKLT…HLFLFVKVRE (78 aa).

The protein belongs to the TRAFAC class TrmE-Era-EngA-EngB-Septin-like GTPase superfamily. Era GTPase family. As to quaternary structure, monomer.

It localises to the cytoplasm. The protein resides in the cell inner membrane. In terms of biological role, an essential GTPase that binds both GDP and GTP, with rapid nucleotide exchange. Plays a role in 16S rRNA processing and 30S ribosomal subunit biogenesis and possibly also in cell cycle regulation and energy metabolism. In Rickettsia canadensis (strain McKiel), this protein is GTPase Era.